The primary structure comprises 422 residues: uncharacterized protein (422 aa).

An N-terminal signal peptide occupies residues 1 to 23; that stretch reads MLSLIPFTVCAFLALITSKGGSA.

In terms of tissue distribution, component of the acid-insoluble organic matrix of the aragonitic skeleton (at protein level).

It localises to the secreted. This is an uncharacterized protein from Acropora millepora (Staghorn coral).